The primary structure comprises 77 residues: Large ribosomal subunit protein bL28 (77 aa).

The interval 1–25 is disordered; sequence MARVCQVTGKAPMSGNNVSHANNKT.

Belongs to the bacterial ribosomal protein bL28 family.

The polypeptide is Large ribosomal subunit protein bL28 (Paraburkholderia phytofirmans (strain DSM 17436 / LMG 22146 / PsJN) (Burkholderia phytofirmans)).